A 286-amino-acid chain; its full sequence is ATP synthase gamma chain (286 aa).

The protein belongs to the ATPase gamma chain family. As to quaternary structure, F-type ATPases have 2 components, CF(1) - the catalytic core - and CF(0) - the membrane proton channel. CF(1) has five subunits: alpha(3), beta(3), gamma(1), delta(1), epsilon(1). CF(0) has three main subunits: a, b and c.

It localises to the cell inner membrane. In terms of biological role, produces ATP from ADP in the presence of a proton gradient across the membrane. The gamma chain is believed to be important in regulating ATPase activity and the flow of protons through the CF(0) complex. This Shewanella halifaxensis (strain HAW-EB4) protein is ATP synthase gamma chain.